We begin with the raw amino-acid sequence, 289 residues long: UPF0761 membrane protein ESA_04062 (289 aa).

The next 6 membrane-spanning stretches (helical) occupy residues 44 to 64, 104 to 124, 140 to 160, 183 to 203, 215 to 235, and 244 to 264; these read LLSL…FPMF, VGAL…DSAL, FAVY…SLVI, IFPL…VPTT, LVAA…ITMF, and VLAV…IVLL.

This sequence belongs to the UPF0761 family.

Its subcellular location is the cell inner membrane. This Cronobacter sakazakii (strain ATCC BAA-894) (Enterobacter sakazakii) protein is UPF0761 membrane protein ESA_04062.